We begin with the raw amino-acid sequence, 283 residues long: Formamidopyrimidine-DNA glycosylase (283 aa).

Residue Pro2 is the Schiff-base intermediate with DNA of the active site. Glu3 acts as the Proton donor in catalysis. Lys61 acts as the Proton donor; for beta-elimination activity in catalysis. Positions 94, 113, and 159 each coordinate DNA. The FPG-type zinc finger occupies 245–279; sequence DAYGREGESCRRCGAVMRREKFMNRSSFYCPKCQP. Catalysis depends on Arg269, which acts as the Proton donor; for delta-elimination activity.

This sequence belongs to the FPG family. In terms of assembly, monomer. Requires Zn(2+) as cofactor.

The enzyme catalyses Hydrolysis of DNA containing ring-opened 7-methylguanine residues, releasing 2,6-diamino-4-hydroxy-5-(N-methyl)formamidopyrimidine.. It catalyses the reaction 2'-deoxyribonucleotide-(2'-deoxyribose 5'-phosphate)-2'-deoxyribonucleotide-DNA = a 3'-end 2'-deoxyribonucleotide-(2,3-dehydro-2,3-deoxyribose 5'-phosphate)-DNA + a 5'-end 5'-phospho-2'-deoxyribonucleoside-DNA + H(+). Its function is as follows. Involved in base excision repair of DNA damaged by oxidation or by mutagenic agents. Acts as a DNA glycosylase that recognizes and removes damaged bases. Has a preference for oxidized purines, such as 7,8-dihydro-8-oxoguanine (8-oxoG). Has AP (apurinic/apyrimidinic) lyase activity and introduces nicks in the DNA strand. Cleaves the DNA backbone by beta-delta elimination to generate a single-strand break at the site of the removed base with both 3'- and 5'-phosphates. The polypeptide is Formamidopyrimidine-DNA glycosylase (Mycolicibacterium paratuberculosis (strain ATCC BAA-968 / K-10) (Mycobacterium paratuberculosis)).